Here is a 136-residue protein sequence, read N- to C-terminus: Large ribosomal subunit protein uL16 (136 aa).

This sequence belongs to the universal ribosomal protein uL16 family. Part of the 50S ribosomal subunit.

Its function is as follows. Binds 23S rRNA and is also seen to make contacts with the A and possibly P site tRNAs. This chain is Large ribosomal subunit protein uL16, found in Shewanella baltica (strain OS155 / ATCC BAA-1091).